Here is a 242-residue protein sequence, read N- to C-terminus: Probable inactive serine protease 58 (242 aa).

The N-terminal stretch at 1–17 (MNLILLWALLNLPVALT) is a signal peptide. In terms of domain architecture, Peptidase S1 spans 18–240 (FDPNYKDDIT…YIPWIENTIQ (223 aa)). Cystine bridges form between cysteine 41/cysteine 57, cysteine 134/cysteine 202, cysteine 166/cysteine 181, and cysteine 192/cysteine 216. An N-linked (GlcNAc...) asparagine glycan is attached at asparagine 157.

The protein belongs to the peptidase S1 family.

It localises to the secreted. The sequence is that of Probable inactive serine protease 58 (PRSS58) from Bos taurus (Bovine).